Consider the following 337-residue polypeptide: Nucleotide sugar transporter SLC35D2 (337 aa).

Over 1 to 27 (MTAGGQAEAEGAGGEPGAARLPSRVAR) the chain is Cytoplasmic. Residues 28–48 (LLSALFYGTCSFLIVLVNKAL) traverse the membrane as a helical segment. Over 49-53 (LTTYG) the chain is Extracellular. A helical transmembrane segment spans residues 54–74 (FPSPIFLGIGQMAATIMILYV). Residues 75-146 (SKLNKIIHFP…IILGKQYSLN (72 aa)) are Cytoplasmic-facing. 2 helical membrane-spanning segments follow: residues 147–167 (IILSVFAIILGAFIAAGSDLA) and 168–188 (FNLEGYIFVFLNDIFTAANGV). The Cytoplasmic segment spans residues 189 to 201 (YTKQKMDPKELGK). Residues 202-222 (YGVLFYNACFMIIPTLIISVS) traverse the membrane as a helical segment. Residues 223 to 237 (TGDLQQATEFNQWKN) are Extracellular-facing. A helical membrane pass occupies residues 238–258 (VVFILQFLLSCFLGFLLMYST). The Cytoplasmic segment spans residues 259-265 (VLCSYYN). Residues 266–288 (SALTTAVVGAIKNVSVAYIGILI) traverse the membrane as a helical segment. Over 289–292 (GGDY) the chain is Extracellular. A helical membrane pass occupies residues 293–315 (IFSLLNFVGLNICMAGGLRYSFL). The Cytoplasmic segment spans residues 316–337 (TLSSQLKPKPVGEENICLDLKS).

It belongs to the TPT transporter family. SLC35D subfamily. Highly expressed in heart, kidney, small intestine, placenta, lung and peripheral blood leukocyte. Weakly expressed in skeletal muscle and spleen. Not expressed in brain, colon and thymus.

It is found in the golgi apparatus membrane. The catalysed reaction is UMP(out) + UDP-N-acetyl-alpha-D-glucosamine(in) = UMP(in) + UDP-N-acetyl-alpha-D-glucosamine(out). It catalyses the reaction UMP(out) + UDP-alpha-D-glucose(in) = UMP(in) + UDP-alpha-D-glucose(out). Functionally, nucleotide sugar antiporter transporting UDP-N-acetylglucosamine (UDP-GlcNAc) and UDP-glucose (UDP-Glc) from the cytosol into the lumen of the Golgi in exchange of UMP. By supplying UDP-N-acetylglucosamine, a donor substrate to heparan sulfate synthases, probably takes part in the synthesis of these glycoconjugates. The sequence is that of Nucleotide sugar transporter SLC35D2 from Homo sapiens (Human).